A 918-amino-acid polypeptide reads, in one-letter code: Whirlin (918 aa).

Residues 141–224 (LVSLRRAKAH…LVLSVYSAGR (84 aa)) enclose the PDZ 1 domain. Residues 240–266 (PQGRSTSPPSSLPQPHGSTLRQREDDR) are disordered. Residues 280-362 (KVNLVLGDGR…LILTVKDVGR (83 aa)) form the PDZ 2 domain. Disordered stretches follow at residues 387-407 (NSAG…GFYK), 503-538 (SMKA…TSTT), and 560-824 (EGTG…LEPT). A compositionally biased stretch (low complexity) spans 522–538 (SYSDTGSSTGSHGTSTT). The segment covering 563 to 572 (GETTQGSTNA) has biased composition (polar residues). Composition is skewed to pro residues over residues 591 to 600 (IKPPPPPPPL) and 638 to 649 (RSPPPGTAPTPG). Positions 654-672 (QDSPSSPIYASISHANPSS) are enriched in polar residues. Ser696 carries the post-translational modification Phosphoserine. Composition is skewed to polar residues over residues 754–773 (QTRT…TLSE) and 783–798 (EAST…SAKN). Over residues 800–811 (NGKEQPRTERTA) the composition is skewed to basic and acidic residues. The region spanning 827–910 (LVRVRKSAAT…TKERDYIDFL (84 aa)) is the PDZ 3 domain.

As to quaternary structure, forms homooligomers. Interacts (via C-terminal PDZ domain) with MYO15A; this interaction is necessary for localization of WHRN to stereocilia tips. Interacts (via C-terminal PDZ domain) with MPP1/p55. Interacts with LRRC4C/NGL1. Interacts with MYO7A. Interacts with RPGR. Interacts with EPS8. Interacts with CASK. Interacts with CIB2. Component of USH2 complex, composed of ADGRV1, PDZD7, USH2A and WHRN. Interacts (via PDZ domains) with PDZD7; the interaction is direct. Interacts (via N-terminal PDZ domain) with USH2A (via cytoplasmic region). Interacts with ADGRV1/MASS1 (via cytoplasmic region). Expressed in the retina. Colocalizes with RPGR in the photoreceptor connecting cilium, a thin bridge linking the cell body and the light-sensing outer segment (at protein level). Detected in the inner ear throughout development from embryonic day 12 to 20 days after birth. Displays a dynamic pattern of expression after birth, demonstrating an ordered appearance and fade-out across stereocilia rows. Isoforms 5, 6, 7 and 8 are not detected in the retina.

Its subcellular location is the cytoplasm. The protein resides in the cell projection. It is found in the stereocilium. It localises to the growth cone. The protein localises to the photoreceptor inner segment. Its subcellular location is the synapse. Involved in hearing and vision as member of the USH2 complex. Necessary for elongation and maintenance of inner and outer hair cell stereocilia in the organ of Corti in the inner ear. Involved in the maintenance of the hair bundle ankle region, which connects stereocilia in cochlear hair cells of the inner ear. In retina photoreceptors, required for the maintenance of periciliary membrane complex that seems to play a role in regulating intracellular protein transport. This chain is Whirlin, found in Mus musculus (Mouse).